Consider the following 803-residue polypeptide: Leucine--tRNA ligase (803 aa).

A 'HIGH' region motif is present at residues 40–51 (PYPSGAGLHVGH). The 'KMSKS' region motif lies at 575–579 (KMSKS). Lys578 is an ATP binding site.

It belongs to the class-I aminoacyl-tRNA synthetase family.

It is found in the cytoplasm. The enzyme catalyses tRNA(Leu) + L-leucine + ATP = L-leucyl-tRNA(Leu) + AMP + diphosphate. This is Leucine--tRNA ligase from Listeria welshimeri serovar 6b (strain ATCC 35897 / DSM 20650 / CCUG 15529 / CIP 8149 / NCTC 11857 / SLCC 5334 / V8).